Consider the following 201-residue polypeptide: Small ribosomal subunit protein uS4c (201 aa).

Residues 16-43 form a disordered region; that stretch reads GALPGLTSKKPRSASDLRNQSRSGKRSQ. Residues 89 to 169 form the S4 RNA-binding domain; that stretch reads MRLDNILFRL…LPKHLTLHSF (81 aa).

This sequence belongs to the universal ribosomal protein uS4 family. As to quaternary structure, part of the 30S ribosomal subunit. Contacts protein S5. The interaction surface between S4 and S5 is involved in control of translational fidelity.

Its subcellular location is the plastid. The protein resides in the chloroplast. Functionally, one of the primary rRNA binding proteins, it binds directly to 16S rRNA where it nucleates assembly of the body of the 30S subunit. In terms of biological role, with S5 and S12 plays an important role in translational accuracy. The chain is Small ribosomal subunit protein uS4c (rps4) from Nymphaea alba (White water-lily).